Here is a 625-residue protein sequence, read N- to C-terminus: Chaperone protein DnaK (625 aa).

A Phosphothreonine; by autocatalysis modification is found at threonine 197. A disordered region spans residues 598–625; it reads MYKKDDNASGEQSGGKKKDDDVIDAEVE.

It belongs to the heat shock protein 70 family.

Functionally, acts as a chaperone. This Campylobacter curvus (strain 525.92) protein is Chaperone protein DnaK.